Consider the following 585-residue polypeptide: NADP-reducing hydrogenase subunit HndD (585 aa).

Positions 2–85 constitute a 2Fe-2S ferredoxin-type domain; the sequence is SMLTITIDGK…NMVVKTNSLR (84 aa). Residues cysteine 36, cysteine 52, cysteine 55, and cysteine 69 each contribute to the [2Fe-2S] cluster site. Residues 85–124 form the 4Fe-4S His(Cys)3-ligated-type domain; it reads RVLNARRTVLELLLSDHPKDCLVCAKSGECELQTLAERFG. Residues histidine 101, cysteine 105, cysteine 108, and cysteine 114 each coordinate [4Fe-4S] cluster. 4Fe-4S ferredoxin-type domains are found at residues 144-174 and 185-216; these read ASII…VLSG and PAFE…EHEY.

As to quaternary structure, heterotetramer composed of HndA, HndB, HndC and HndD subunits. HndD is probably the hydrogenase subunit. Requires [4Fe-4S] cluster as cofactor.

It carries out the reaction H2 + NADP(+) = NADPH + H(+). Inhibited by oxygen. Functionally, catalyzes the reduction of NADP in the presence of molecular H(2) to yield NADPH. The sequence is that of NADP-reducing hydrogenase subunit HndD (hndD) from Solidesulfovibrio fructosivorans (Desulfovibrio fructosivorans).